We begin with the raw amino-acid sequence, 229 residues long: Uracil-DNA glycosylase (229 aa).

Aspartate 64 functions as the Proton acceptor in the catalytic mechanism.

The protein belongs to the uracil-DNA glycosylase (UDG) superfamily. UNG family.

Its subcellular location is the cytoplasm. The enzyme catalyses Hydrolyzes single-stranded DNA or mismatched double-stranded DNA and polynucleotides, releasing free uracil.. Functionally, excises uracil residues from the DNA which can arise as a result of misincorporation of dUMP residues by DNA polymerase or due to deamination of cytosine. The protein is Uracil-DNA glycosylase of Escherichia coli (strain 55989 / EAEC).